The primary structure comprises 346 residues: MKFLDQVKIYVRSGNGGAGAVSFRREKYIEYGGPDGGDGGRGGDVWIEAVEGLNTLIDYRYQQHFKAGTGVHGMGRNRHGAAGEDVVLKVPVGTEVLDEDKNLIVDMDEAGKRYLLAKGGNGGFGNTHFKGPVNQAPRHANPGLPGEERAIWLRLKLIADVGLVGLPNAGKSTFLAAASAAKPKIADYPFTTLAPNLGVVDLSVGERFVLADIPGLIEGAHEGAGIGTRFLGHIERTAVLIHLVDGTQEDIVGAWRTVRHELEAYGADLADKPEILALNKIDALDEETRAEKQAQLAEAAGMDVRLVSGFTGENVTELLREAFALVRERKRAAAEEAAGPSEGWTP.

The region spanning 1 to 158 is the Obg domain; it reads MKFLDQVKIY…RAIWLRLKLI (158 aa). The region spanning 159–327 is the OBG-type G domain; sequence ADVGLVGLPN…LLREAFALVR (169 aa). GTP contacts are provided by residues 165-172, 190-194, 212-215, 279-282, and 308-310; these read GLPNAGKS, FTTLA, DIPG, NKID, and SGF. Mg(2+) contacts are provided by Ser172 and Thr192.

Belongs to the TRAFAC class OBG-HflX-like GTPase superfamily. OBG GTPase family. Monomer. It depends on Mg(2+) as a cofactor.

The protein resides in the cytoplasm. An essential GTPase which binds GTP, GDP and possibly (p)ppGpp with moderate affinity, with high nucleotide exchange rates and a fairly low GTP hydrolysis rate. Plays a role in control of the cell cycle, stress response, ribosome biogenesis and in those bacteria that undergo differentiation, in morphogenesis control. The sequence is that of GTPase Obg from Phenylobacterium zucineum (strain HLK1).